The following is a 1047-amino-acid chain: Probable sucrose-phosphate synthase 2 (1047 aa).

Residues 101 to 123 (EGKNAKREAKREREREKARREVT) are compositionally biased toward basic and acidic residues. The tract at residues 101–153 (EGKNAKREAKREREREKARREVTAEMSEDFSEGEKADLPGEIPTPSDNNTKGR) is disordered. Phosphoserine is present on residues serine 127, serine 131, and serine 159. Residues 712–731 (KSGSNNGVDTNLDAEDRAAE) are disordered.

The protein belongs to the glycosyltransferase 1 family. Homodimer or homotetramer. Expressed in roots, cauline leaves, flower buds, flowers and anthers. Highly expressed in maturing nectaries.

The catalysed reaction is beta-D-fructose 6-phosphate + UDP-alpha-D-glucose = sucrose 6(F)-phosphate + UDP + H(+). The protein operates within glycan biosynthesis; sucrose biosynthesis; sucrose from D-fructose 6-phosphate and UDP-alpha-D-glucose: step 1/2. Its activity is regulated as follows. Activity is regulated by phosphorylation and moderated by concentration of metabolites and light. Plays a role in photosynthetic sucrose synthesis by catalyzing the rate-limiting step of sucrose biosynthesis from UDP-glucose and fructose- 6-phosphate. Involved in the regulation of carbon partitioning in the leaves of plants. May regulate the synthesis of sucrose and therefore play a major role as a limiting factor in the export of photoassimilates out of the leaf. Plays a role for sucrose availability that is essential for plant growth and fiber elongation. Required for nectar secretion. This chain is Probable sucrose-phosphate synthase 2 (SPS2), found in Arabidopsis thaliana (Mouse-ear cress).